The chain runs to 257 residues: 5'-nucleotidase SurE (257 aa).

Positions 11, 12, 42, and 99 each coordinate a divalent metal cation.

Belongs to the SurE nucleotidase family. It depends on a divalent metal cation as a cofactor.

The protein localises to the cytoplasm. It catalyses the reaction a ribonucleoside 5'-phosphate + H2O = a ribonucleoside + phosphate. Nucleotidase that shows phosphatase activity on nucleoside 5'-monophosphates. This Flavobacterium psychrophilum (strain ATCC 49511 / DSM 21280 / CIP 103535 / JIP02/86) protein is 5'-nucleotidase SurE.